We begin with the raw amino-acid sequence, 59 residues long: Large ribosomal subunit protein uL30 (59 aa).

Belongs to the universal ribosomal protein uL30 family. Part of the 50S ribosomal subunit.

In Solidesulfovibrio magneticus (strain ATCC 700980 / DSM 13731 / RS-1) (Desulfovibrio magneticus), this protein is Large ribosomal subunit protein uL30.